The following is a 106-amino-acid chain: COX assembly mitochondrial protein homolog (106 aa).

The residue at position 2 (Ala2) is an N-acetylalanine. The CHCH domain occupies 28-71 (RERCSEQVQDFTKCCKDSGVLMVVKCRKENSALKDCLTSYYKDP). 2 consecutive short sequence motifs (cx9C motif) follow at residues 31–41 (CSEQVQDFTKC) and 53–63 (CRKENSALKDC). 2 disulfide bridges follow: Cys31/Cys63 and Cys41/Cys53.

The protein belongs to the CMC family. Component of the MITRAC (mitochondrial translation regulation assembly intermediate of cytochrome c oxidase complex) complex, the core components of this complex being COA3/MITRAC12 and COX14.

The protein resides in the mitochondrion. Component of the MITRAC (mitochondrial translation regulation assembly intermediate of cytochrome c oxidase complex) complex, that regulates cytochrome c oxidase assembly. The polypeptide is COX assembly mitochondrial protein homolog (CMC1) (Bos taurus (Bovine)).